An 85-amino-acid polypeptide reads, in one-letter code: Cytochrome b (85 aa).

Helical transmembrane passes span 1 to 8 (LTGLFLAM), 32 to 53 (WLIRNIHANGASFFFICIYLHI), and 68 to 85 (WNVGVVLLLLVMMTAFVG). H38 and H52 together coordinate heme b.

Belongs to the cytochrome b family. The cytochrome bc1 complex contains 3 respiratory subunits (MT-CYB, CYC1 and UQCRFS1), 2 core proteins (UQCRC1 and UQCRC2) and probably 6 low-molecular weight proteins. It depends on heme b as a cofactor.

It localises to the mitochondrion inner membrane. In terms of biological role, component of the ubiquinol-cytochrome c reductase complex (complex III or cytochrome b-c1 complex) that is part of the mitochondrial respiratory chain. The b-c1 complex mediates electron transfer from ubiquinol to cytochrome c. Contributes to the generation of a proton gradient across the mitochondrial membrane that is then used for ATP synthesis. This chain is Cytochrome b (mt-cyb), found in Pomoxis nigromaculatus (Black crappie).